Consider the following 127-residue polypeptide: Large ribosomal subunit protein bL20 (127 aa).

Belongs to the bacterial ribosomal protein bL20 family.

Binds directly to 23S ribosomal RNA and is necessary for the in vitro assembly process of the 50S ribosomal subunit. It is not involved in the protein synthesizing functions of that subunit. The polypeptide is Large ribosomal subunit protein bL20 (Corynebacterium aurimucosum (strain ATCC 700975 / DSM 44827 / CIP 107346 / CN-1) (Corynebacterium nigricans)).